The chain runs to 697 residues: Potassium-transporting ATPase ATP-binding subunit (697 aa).

The next 4 membrane-spanning stretches (helical) occupy residues 55–75 (PIMF…FLPS), 79–99 (SIPG…VLFA), 245–265 (LTLI…YLGF), and 271–291 (VLVA…LSAI). The active-site 4-aspartylphosphate intermediate is the aspartate 324. Residues aspartate 361, glutamate 365, 393 to 400 (FKAETRMS), and lysine 412 contribute to the ATP site. Positions 535 and 539 each coordinate Mg(2+). The next 3 membrane-spanning stretches (helical) occupy residues 605-625 (FAII…LNIM), 633-653 (AILS…PLAM), and 677-697 (GGVI…GLFI).

Belongs to the cation transport ATPase (P-type) (TC 3.A.3) family. Type IA subfamily. The system is composed of three essential subunits: KdpA, KdpB and KdpC.

It is found in the cell membrane. It catalyses the reaction K(+)(out) + ATP + H2O = K(+)(in) + ADP + phosphate + H(+). Its function is as follows. Part of the high-affinity ATP-driven potassium transport (or Kdp) system, which catalyzes the hydrolysis of ATP coupled with the electrogenic transport of potassium into the cytoplasm. This subunit is responsible for energy coupling to the transport system and for the release of the potassium ions to the cytoplasm. In Bacillus cereus (strain ATCC 14579 / DSM 31 / CCUG 7414 / JCM 2152 / NBRC 15305 / NCIMB 9373 / NCTC 2599 / NRRL B-3711), this protein is Potassium-transporting ATPase ATP-binding subunit.